The chain runs to 421 residues: D-amino acid dehydrogenase (421 aa).

Position 3 to 17 (3 to 17) interacts with FAD; it reads ILILGSGVVGTASAY.

Belongs to the DadA oxidoreductase family. FAD is required as a cofactor.

The catalysed reaction is a D-alpha-amino acid + A + H2O = a 2-oxocarboxylate + AH2 + NH4(+). The protein operates within amino-acid degradation; D-alanine degradation; NH(3) and pyruvate from D-alanine: step 1/1. Oxidative deamination of D-amino acids. The protein is D-amino acid dehydrogenase of Xanthobacter autotrophicus (strain ATCC BAA-1158 / Py2).